Here is a 177-residue protein sequence, read N- to C-terminus: Large ribosomal subunit protein uL6 (177 aa).

The protein belongs to the universal ribosomal protein uL6 family. In terms of assembly, part of the 50S ribosomal subunit.

Its function is as follows. This protein binds to the 23S rRNA, and is important in its secondary structure. It is located near the subunit interface in the base of the L7/L12 stalk, and near the tRNA binding site of the peptidyltransferase center. This is Large ribosomal subunit protein uL6 from Bartonella bacilliformis (strain ATCC 35685 / KC583 / Herrer 020/F12,63).